Reading from the N-terminus, the 237-residue chain is 2,3-bisphosphoglycerate-dependent phosphoglycerate mutase (237 aa).

Substrate is bound by residues 8–15, 21–22, arginine 60, 87–90, lysine 98, 114–115, and 180–181; these read RHGQSQWN, TG, ERHY, RR, and GN. Histidine 9 functions as the Tele-phosphohistidine intermediate in the catalytic mechanism. Glutamate 87 (proton donor/acceptor) is an active-site residue.

Belongs to the phosphoglycerate mutase family. BPG-dependent PGAM subfamily. Homodimer.

The catalysed reaction is (2R)-2-phosphoglycerate = (2R)-3-phosphoglycerate. The protein operates within carbohydrate degradation; glycolysis; pyruvate from D-glyceraldehyde 3-phosphate: step 3/5. Its function is as follows. Catalyzes the interconversion of 2-phosphoglycerate and 3-phosphoglycerate. This chain is 2,3-bisphosphoglycerate-dependent phosphoglycerate mutase, found in Caulobacter sp. (strain K31).